A 310-amino-acid polypeptide reads, in one-letter code: Transcription factor MYB53 (310 aa).

2 consecutive HTH myb-type domains span residues 9–61 (ETGL…TNYL) and 62–116 (RPDI…KKKL). 2 DNA-binding regions (H-T-H motif) span residues 37 to 61 (WSAL…TNYL) and 89 to 112 (WSMI…NTHL).

Interacts with FBX5. As to expression, highly expressed in roots and at lower levels in leaves, stems and flowers.

Its subcellular location is the nucleus. Its function is as follows. Probable transcription factor. In Arabidopsis thaliana (Mouse-ear cress), this protein is Transcription factor MYB53.